A 326-amino-acid polypeptide reads, in one-letter code: Pyruvate dehydrogenase E1 component subunit alpha (326 aa).

Heterodimer of an alpha and a beta chain. Requires thiamine diphosphate as cofactor.

The catalysed reaction is N(6)-[(R)-lipoyl]-L-lysyl-[protein] + pyruvate + H(+) = N(6)-[(R)-S(8)-acetyldihydrolipoyl]-L-lysyl-[protein] + CO2. In terms of biological role, the pyruvate dehydrogenase complex catalyzes the overall conversion of pyruvate to acetyl-CoA and CO(2). It contains multiple copies of three enzymatic components: pyruvate dehydrogenase (E1), dihydrolipoamide acetyltransferase (E2) and lipoamide dehydrogenase (E3). The polypeptide is Pyruvate dehydrogenase E1 component subunit alpha (pdhA) (Rickettsia conorii (strain ATCC VR-613 / Malish 7)).